Reading from the N-terminus, the 119-residue chain is MVKLAFPRELRLLTPSHFTFVFQQPQRAGTPQITILGRLNELGHPRIGLTVAKKHVKRAHERNRIKRLTRESFRLHQHALPSMDFVVLVKKGVADLDNRALTEALEKLWRRHCRQAPAS.

Belongs to the RnpA family. Consists of a catalytic RNA component (M1 or rnpB) and a protein subunit.

The enzyme catalyses Endonucleolytic cleavage of RNA, removing 5'-extranucleotides from tRNA precursor.. In terms of biological role, RNaseP catalyzes the removal of the 5'-leader sequence from pre-tRNA to produce the mature 5'-terminus. It can also cleave other RNA substrates such as 4.5S RNA. The protein component plays an auxiliary but essential role in vivo by binding to the 5'-leader sequence and broadening the substrate specificity of the ribozyme. This Yersinia pseudotuberculosis serotype O:1b (strain IP 31758) protein is Ribonuclease P protein component.